Here is an 862-residue protein sequence, read N- to C-terminus: Rab GTPase-binding effector protein 1 (862 aa).

Ala2 carries the N-acetylalanine modification. Positions 11 to 328 (DVSLQQRVAE…KDQEEDEQQR (318 aa)) form a coiled coil. Lys282 is modified (N6-acetyllysine). Disordered regions lie at residues 315–340 (ELKK…KIDT) and 355–374 (EESS…THGS). Phosphoserine is present on residues Ser374, Ser377, and Ser407. The residue at position 408 (Thr408) is a Phosphothreonine. Phosphoserine is present on Ser410. Residues 534–816 (DMCSNYEKQL…LQTELDVSEQ (283 aa)) are a coiled coil.

Belongs to the rabaptin family. In terms of assembly, heterodimer with RABGEF1. The heterodimer binds RAB4A and RAB5A that have been activated by GTP-binding. Interacts with TSC2. Interacts with GGA1 (via GAE domain), GGA2 (via GAE domain) and GGA3 (via GAE domain). Interacts with AP1G1 (via GAE domain). Interacts with AP1G2 (via GAE domain). Interacts with ECPAS. Interacts with KCNH1. Interacts with PKD1 (via C-terminal domain) and GGA1; the interactions recruit PKD1:PKD2 complex to GGA1 and ARL3 at trans-Golgi network. Interacts with KCNH1. Post-translationally, proteolytic cleavage by caspases in apoptotic cells causes loss of endosome fusion activity.

The protein resides in the cytoplasm. The protein localises to the early endosome. Its subcellular location is the recycling endosome. It is found in the cytoplasmic vesicle. Functionally, rab effector protein acting as linker between gamma-adaptin, RAB4A and RAB5A. Involved in endocytic membrane fusion and membrane trafficking of recycling endosomes. Involved in KCNH1 channels trafficking to and from the cell membrane. Stimulates RABGEF1 mediated nucleotide exchange on RAB5A. Mediates the traffic of PKD1:PKD2 complex from the endoplasmic reticulum through the Golgi to the cilium. In Rattus norvegicus (Rat), this protein is Rab GTPase-binding effector protein 1 (Rabep1).